A 359-amino-acid chain; its full sequence is tRNA N6-adenosine threonylcarbamoyltransferase (359 aa).

Residues His115 and His119 each coordinate Fe cation. Residues 137–141, Asp170, Gly183, and Asn283 each bind substrate; that span reads LVSGG. Asp311 contacts Fe cation. A disordered region spans residues 328–359; sequence APDSLDIAPRSRWPLDEKSAPVFGTGRRGAKA.

This sequence belongs to the KAE1 / TsaD family. It depends on Fe(2+) as a cofactor.

Its subcellular location is the cytoplasm. The enzyme catalyses L-threonylcarbamoyladenylate + adenosine(37) in tRNA = N(6)-L-threonylcarbamoyladenosine(37) in tRNA + AMP + H(+). In terms of biological role, required for the formation of a threonylcarbamoyl group on adenosine at position 37 (t(6)A37) in tRNAs that read codons beginning with adenine. Is involved in the transfer of the threonylcarbamoyl moiety of threonylcarbamoyl-AMP (TC-AMP) to the N6 group of A37, together with TsaE and TsaB. TsaD likely plays a direct catalytic role in this reaction. This Brucella suis (strain ATCC 23445 / NCTC 10510) protein is tRNA N6-adenosine threonylcarbamoyltransferase.